The sequence spans 336 residues: Nicotinate-nucleotide--dimethylbenzimidazole phosphoribosyltransferase (336 aa).

The active-site Proton acceptor is glutamate 304.

Belongs to the CobT family.

It carries out the reaction 5,6-dimethylbenzimidazole + nicotinate beta-D-ribonucleotide = alpha-ribazole 5'-phosphate + nicotinate + H(+). It participates in nucleoside biosynthesis; alpha-ribazole biosynthesis; alpha-ribazole from 5,6-dimethylbenzimidazole: step 1/2. Catalyzes the synthesis of alpha-ribazole-5'-phosphate from nicotinate mononucleotide (NAMN) and 5,6-dimethylbenzimidazole (DMB). The polypeptide is Nicotinate-nucleotide--dimethylbenzimidazole phosphoribosyltransferase (Ruegeria sp. (strain TM1040) (Silicibacter sp.)).